A 37-amino-acid chain; its full sequence is Large ribosomal subunit protein bL36c (37 aa).

It belongs to the bacterial ribosomal protein bL36 family.

The protein resides in the plastid. It localises to the chloroplast. The sequence is that of Large ribosomal subunit protein bL36c from Lotus japonicus (Lotus corniculatus var. japonicus).